The primary structure comprises 365 residues: Protein-glutamate methylesterase/protein-glutamine glutaminase 2 (365 aa).

One can recognise a Response regulatory domain in the interval 6 to 123 (RVLIIDDSAS…ADSLSDDAMR (118 aa)). Asp57 carries the post-translational modification 4-aspartylphosphate. Residues 173–359 (AKTTEMVVCV…PLDQIAREVL (187 aa)) form the CheB-type methylesterase domain. Catalysis depends on residues Ser185, His211, and Asp307.

This sequence belongs to the CheB family. Post-translationally, phosphorylated by CheA. Phosphorylation of the N-terminal regulatory domain activates the methylesterase activity.

It is found in the cytoplasm. It carries out the reaction [protein]-L-glutamate 5-O-methyl ester + H2O = L-glutamyl-[protein] + methanol + H(+). The enzyme catalyses L-glutaminyl-[protein] + H2O = L-glutamyl-[protein] + NH4(+). Its function is as follows. Involved in chemotaxis. Part of a chemotaxis signal transduction system that modulates chemotaxis in response to various stimuli. Catalyzes the demethylation of specific methylglutamate residues introduced into the chemoreceptors (methyl-accepting chemotaxis proteins or MCP) by CheR. Also mediates the irreversible deamidation of specific glutamine residues to glutamic acid. The sequence is that of Protein-glutamate methylesterase/protein-glutamine glutaminase 2 from Rhizobium johnstonii (strain DSM 114642 / LMG 32736 / 3841) (Rhizobium leguminosarum bv. viciae).